The sequence spans 409 residues: MNHSPATTFSPHSRYQELKVRNKKSTKKSHKEKYRLKCLRLRRVAKDMVFENAALCDEIARTEDKFIRAKEERRFLLKRLLQLQALSEEEPGTSHNSNVSAGYSVPDMAAMNEGNLDMCYSSVLDDGGSCKKVKKDKREKGKENKSEAMKKPSKKKRVTEGTTRKWVQPIALDPCGRPVFPIVLEGLTVYSLGEIISDRAGFHEKVAIYPVGFCSTRVYVGMKNPDQKCLYTCQIKDGGTGPQFEIVPDDDPQNSIVASSADECHSILLQKISTPLGKRFSTPDLAGAYFFGFTHPTIQNLIQSCPGARKCTGYQWVKFEVCRAGEEQVPRDICESSASVNFEAFQRQSFATINNSTALAGTLDLPEIHASHDYISTYQEIFLSHSQLASGMQHLKSPSNQYSPSRSSE.

A compositionally biased stretch (polar residues) spans 1–13 (MNHSPATTFSPHS). Disordered stretches follow at residues 1-31 (MNHSPATTFSPHSRYQELKVRNKKSTKKSHK) and 127-162 (GGSCKKVKKDKREKGKENKSEAMKKPSKKKRVTEGT). Positions 21-31 (RNKKSTKKSHK) are enriched in basic residues. The segment covering 136 to 150 (DKREKGKENKSEAMK) has biased composition (basic and acidic residues). The FYR N-terminal domain occupies 179–238 (VFPIVLEGLTVYSLGEIISDRAGFHEKVAIYPVGFCSTRVYVGMKNPDQKCLYTCQIKDG). Positions 239–318 (GTGPQFEIVP…RKCTGYQWVK (80 aa)) constitute an FYR C-terminal domain.

This sequence belongs to the TBRG1 family.

The protein localises to the nucleus. In terms of biological role, may act as a growth inhibitor. May be involved in maintaining chromosomal stability. The protein is Transforming growth factor beta regulator 1 (tbrg1) of Xenopus tropicalis (Western clawed frog).